The following is a 268-amino-acid chain: uncharacterized protein (268 aa).

Transmembrane regions (helical) follow at residues Ser32–Ile52, Val70–Phe90, Gly125–Phe145, and Ile237–Thr257.

The protein belongs to the CbiQ family.

It localises to the cell membrane. This is an uncharacterized protein from Methanocaldococcus jannaschii (strain ATCC 43067 / DSM 2661 / JAL-1 / JCM 10045 / NBRC 100440) (Methanococcus jannaschii).